We begin with the raw amino-acid sequence, 529 residues long: MQQRRPIRRALLSVSDKAGIIEFAQALSQRGIELLSTGGTARLLADAGLPVTEVSDYTGFPEMMDGRVKTLHPKVHGGILGRRGQDDGIMAQHGIQPIDIVVVNLYPFAQTVARPDCSLEDAVENIDIGGPTMVRSAAKNHKDVAIVVKSSDYPAIITELDNNDGSLTYPTRFNLAIKAFEHTAAYDSMIANYFGTLVPPYHGDTEQPSGHFPRTLNLNYIKKQDMRYGENSHQQAAFYIEEDVKEASVATAQQLQGKALSYNNIADTDAALECVKEFSEPACVIVKHANPCGVAIGDSILAAYERAYQTDPTSAFGGIIAFNRELDAATASAIISRQFVEVIIAPTVSSDALALLAAKQNVRVLTCGQWQARSAGLDFKRVNGGLLVQERDLGMVTAADLRVVSKRQPTEQELRDALFCWKVAKFVKSNAIVYARDNMTIGIGAGQMSRVYSAKIAGIKAADEGLEVAGSAMASDAFFPFRDGIDAAAAVGITCVIQPGGSIRDDEVIAAADEHSIAMIFTDMRHFRH.

The region spanning 1-148 (MQQRRPIRRA…KNHKDVAIVV (148 aa)) is the MGS-like domain.

The protein belongs to the PurH family.

It carries out the reaction (6R)-10-formyltetrahydrofolate + 5-amino-1-(5-phospho-beta-D-ribosyl)imidazole-4-carboxamide = 5-formamido-1-(5-phospho-D-ribosyl)imidazole-4-carboxamide + (6S)-5,6,7,8-tetrahydrofolate. The enzyme catalyses IMP + H2O = 5-formamido-1-(5-phospho-D-ribosyl)imidazole-4-carboxamide. It functions in the pathway purine metabolism; IMP biosynthesis via de novo pathway; 5-formamido-1-(5-phospho-D-ribosyl)imidazole-4-carboxamide from 5-amino-1-(5-phospho-D-ribosyl)imidazole-4-carboxamide (10-formyl THF route): step 1/1. It participates in purine metabolism; IMP biosynthesis via de novo pathway; IMP from 5-formamido-1-(5-phospho-D-ribosyl)imidazole-4-carboxamide: step 1/1. In Yersinia pseudotuberculosis serotype O:1b (strain IP 31758), this protein is Bifunctional purine biosynthesis protein PurH.